A 101-amino-acid polypeptide reads, in one-letter code: Small ribosomal subunit protein uS14 (101 aa).

The protein belongs to the universal ribosomal protein uS14 family. In terms of assembly, part of the 30S ribosomal subunit. Contacts proteins S3 and S10.

In terms of biological role, binds 16S rRNA, required for the assembly of 30S particles and may also be responsible for determining the conformation of the 16S rRNA at the A site. This Brucella abortus (strain S19) protein is Small ribosomal subunit protein uS14.